The chain runs to 268 residues: Phosphate import ATP-binding protein PstB (268 aa).

One can recognise an ABC transporter domain in the interval Leu22 to Ile263. Gly54 to Ser61 serves as a coordination point for ATP.

Belongs to the ABC transporter superfamily. Phosphate importer (TC 3.A.1.7) family. The complex is composed of two ATP-binding proteins (PstB), two transmembrane proteins (PstC and PstA) and a solute-binding protein (PstS).

It localises to the cell inner membrane. The enzyme catalyses phosphate(out) + ATP + H2O = ADP + 2 phosphate(in) + H(+). Its function is as follows. Part of the ABC transporter complex PstSACB involved in phosphate import. Responsible for energy coupling to the transport system. This Gluconobacter oxydans (strain 621H) (Gluconobacter suboxydans) protein is Phosphate import ATP-binding protein PstB.